Here is a 218-residue protein sequence, read N- to C-terminus: Adenylate kinase (218 aa).

10–15 (GAGKGT) is an ATP binding site. An NMP region spans residues 30–59 (STGDMLRNAAKEGKPLGLEAKKIMDAGQLV). AMP is bound by residues Thr-31, Arg-36, 57-59 (QLV), 85-88 (GFPR), and Gln-92. The interval 122 to 159 (GRRVHLASGRSYHVMFNPPKQEGLDDATGEPLVQRADD) is LID. Residues Arg-123 and 132-133 (SY) contribute to the ATP site. Positions 156 and 167 each coordinate AMP. Gly-203 is an ATP binding site.

Belongs to the adenylate kinase family. As to quaternary structure, monomer.

It is found in the cytoplasm. The enzyme catalyses AMP + ATP = 2 ADP. It participates in purine metabolism; AMP biosynthesis via salvage pathway; AMP from ADP: step 1/1. In terms of biological role, catalyzes the reversible transfer of the terminal phosphate group between ATP and AMP. Plays an important role in cellular energy homeostasis and in adenine nucleotide metabolism. This chain is Adenylate kinase, found in Chlorobium chlorochromatii (strain CaD3).